The following is a 155-amino-acid chain: D-aminoacyl-tRNA deacylase (155 aa).

The short motif at 137–138 (GP) is the Gly-cisPro motif, important for rejection of L-amino acids element.

This sequence belongs to the DTD family. Homodimer.

It localises to the cytoplasm. The enzyme catalyses glycyl-tRNA(Ala) + H2O = tRNA(Ala) + glycine + H(+). It carries out the reaction a D-aminoacyl-tRNA + H2O = a tRNA + a D-alpha-amino acid + H(+). Its function is as follows. An aminoacyl-tRNA editing enzyme that deacylates mischarged D-aminoacyl-tRNAs. Also deacylates mischarged glycyl-tRNA(Ala), protecting cells against glycine mischarging by AlaRS. Acts via tRNA-based rather than protein-based catalysis; rejects L-amino acids rather than detecting D-amino acids in the active site. By recycling D-aminoacyl-tRNA to D-amino acids and free tRNA molecules, this enzyme counteracts the toxicity associated with the formation of D-aminoacyl-tRNA entities in vivo and helps enforce protein L-homochirality. This is D-aminoacyl-tRNA deacylase from Geotalea uraniireducens (strain Rf4) (Geobacter uraniireducens).